The primary structure comprises 168 residues: Large ribosomal subunit protein uL5 (168 aa).

It belongs to the universal ribosomal protein uL5 family. In terms of assembly, part of the 50S ribosomal subunit; contacts the 5S rRNA and probably tRNA. Forms a bridge to the 30S subunit in the 70S ribosome.

In terms of biological role, this is one of the proteins that bind and probably mediate the attachment of the 5S RNA into the large ribosomal subunit, where it forms part of the central protuberance. In the 70S ribosome it contacts protein S13 of the 30S subunit (bridge B1b), connecting the 2 subunits; this bridge is implicated in subunit movement. May contact the P site tRNA; the 5S rRNA and some of its associated proteins might help stabilize positioning of ribosome-bound tRNAs. This Methanosphaera stadtmanae (strain ATCC 43021 / DSM 3091 / JCM 11832 / MCB-3) protein is Large ribosomal subunit protein uL5.